The primary structure comprises 712 residues: BTB/POZ domain-containing protein 18 (712 aa).

Positions cysteine 34 to glutamine 102 constitute a BTB domain. 3 disordered regions span residues valine 157 to leucine 176, arginine 212 to valine 355, and glutamate 374 to serine 410. Residues glutamine 218–serine 228 show a composition bias toward polar residues. The segment covering glutamine 229 to threonine 238 has biased composition (basic and acidic residues). Over residues serine 277 to serine 288 the composition is skewed to low complexity. Over residues valine 303–lysine 313 the composition is skewed to basic and acidic residues. Over residues proline 396–serine 410 the composition is skewed to polar residues. Phosphoserine is present on residues serine 420, serine 671, and serine 672. Disordered regions lie at residues lysine 653–glutamate 676 and threonine 691–threonine 712. A compositionally biased stretch (acidic residues) spans serine 702–threonine 712.

The protein resides in the nucleus. Functionally, specifically required during spermatogenesis to promote expression of piRNA precursors. The piRNA metabolic process mediates the repression of transposable elements during meiosis by forming complexes composed of piRNAs and Piwi proteins and governs the methylation and subsequent repression of transposons, which is essential for the germline integrity. Acts by facilitating transcription elongation at piRNA loci during pachytene. This Homo sapiens (Human) protein is BTB/POZ domain-containing protein 18.